We begin with the raw amino-acid sequence, 270 residues long: MTRQDLVLFRPRLALLNGIAAVAGHALVPDAAHATLWVALAGVAILAAGGSALNQVLERDLDRLMERTRQRPLPRGDLSPAMATALGCACIGTGLLVLAAGGPVPPLLGAVALAWYLAVYTPLKRRTSLALAIGAVSGALPPVIGWTLAGGAPGDYRIILLAGIFFLWQVPHFWLFQRRHADDYRRAGIPLFTPGAGRLGPSFHVRLWLGALAASVLLLPAFGLMAPRMAPWIAAVPLLLLPVCRPRSEATLFSCLNAFPPLMALALLLR.

A run of 7 helical transmembrane segments spans residues 13–30 (LALL…LVPD), 33–53 (HATL…GSAL), 95–115 (LLVL…ALAW), 129–149 (LALA…WTLA), 156–176 (YRII…FWLF), 207–227 (LWLG…LMAP), and 249–269 (EATL…ALLL).

Belongs to the UbiA prenyltransferase family. Protoheme IX farnesyltransferase subfamily.

Its subcellular location is the cell inner membrane. The catalysed reaction is heme b + (2E,6E)-farnesyl diphosphate + H2O = Fe(II)-heme o + diphosphate. Its pathway is porphyrin-containing compound metabolism; heme O biosynthesis; heme O from protoheme: step 1/1. Functionally, converts heme B (protoheme IX) to heme O by substitution of the vinyl group on carbon 2 of heme B porphyrin ring with a hydroxyethyl farnesyl side group. The sequence is that of Protoheme IX farnesyltransferase from Geobacter sulfurreducens (strain ATCC 51573 / DSM 12127 / PCA).